The following is a 342-amino-acid chain: Succinylglutamate desuccinylase (342 aa).

Positions 62, 65, and 158 each coordinate Zn(2+). E222 is an active-site residue.

It belongs to the AspA/AstE family. Succinylglutamate desuccinylase subfamily. Zn(2+) serves as cofactor.

The enzyme catalyses N-succinyl-L-glutamate + H2O = L-glutamate + succinate. Its pathway is amino-acid degradation; L-arginine degradation via AST pathway; L-glutamate and succinate from L-arginine: step 5/5. Its function is as follows. Transforms N(2)-succinylglutamate into succinate and glutamate. The chain is Succinylglutamate desuccinylase from Shewanella frigidimarina (strain NCIMB 400).